Here is a 259-residue protein sequence, read N- to C-terminus: Protein TILLER ANGLE CONTROL 1 (259 aa).

The IGT motif signature appears at 56-62 (GILAIGT). 3 disordered regions span residues 96–123 (EEKA…AKMH), 206–226 (SCME…PLKA), and 239–259 (GKKI…PVTA). A compositionally biased stretch (low complexity) spans 109–119 (APSEPASALEP).

The protein belongs to the TAC family. Expressed in the basal part of seedlings.

In terms of biological role, involved in the regulation of tiller growth angle. Promotes horizontal shoot growth. TAC1 and LAZY1 play opposite functions in the regulation of tiller growth angle. This Oryza sativa subsp. indica (Rice) protein is Protein TILLER ANGLE CONTROL 1.